The primary structure comprises 373 residues: Glutamate 5-kinase (373 aa).

Residue Lys12 participates in ATP binding. 3 residues coordinate substrate: Ser52, Asp139, and Asn154. An ATP-binding site is contributed by 216–222 (TGGMVTK). The 79-residue stretch at 281–359 (RGSICVDDGA…QELNAVLGGN (79 aa)) folds into the PUA domain.

The protein belongs to the glutamate 5-kinase family.

It is found in the cytoplasm. It carries out the reaction L-glutamate + ATP = L-glutamyl 5-phosphate + ADP. Its pathway is amino-acid biosynthesis; L-proline biosynthesis; L-glutamate 5-semialdehyde from L-glutamate: step 1/2. Functionally, catalyzes the transfer of a phosphate group to glutamate to form L-glutamate 5-phosphate. The polypeptide is Glutamate 5-kinase (Dehalococcoides mccartyi (strain CBDB1)).